We begin with the raw amino-acid sequence, 101 residues long: Urease subunit beta (101 aa).

The protein belongs to the urease beta subunit family. Heterotrimer of UreA (gamma), UreB (beta) and UreC (alpha) subunits. Three heterotrimers associate to form the active enzyme.

The protein resides in the cytoplasm. It carries out the reaction urea + 2 H2O + H(+) = hydrogencarbonate + 2 NH4(+). Its pathway is nitrogen metabolism; urea degradation; CO(2) and NH(3) from urea (urease route): step 1/1. The protein is Urease subunit beta of Sinorhizobium fredii (strain NBRC 101917 / NGR234).